We begin with the raw amino-acid sequence, 329 residues long: Transcription factor MYB2 (329 aa).

2 consecutive HTH myb-type domains span residues 17–69 (GGDL…LNYL) and 70–124 (RPDL…QKHA). DNA-binding regions (H-T-H motif) lie at residues 45–69 (WNSL…LNYL) and 97–120 (WSKI…RTRV). Low complexity-rich tracts occupy residues 155–166 (AAAGQQQQQEGG) and 217–235 (LSST…GAGA). Disordered stretches follow at residues 155–189 (AAAG…PELP) and 206–242 (GAQS…WPTQ).

As to expression, highly expressed in leaves. Expressed in roots and shoots. Expressed at low levels in flowers.

Its subcellular location is the nucleus. Functionally, transcription factor involved in abiotic stress responses. Plays a regulatory role in tolerance to salt, cold, and drought stresses. Positively regulates the expression of genes involved in proline synthesis and transport, and genes involved in reactive oxygen species (ROS) scavenging such as peroxidase, superoxide dismutase and catalase during salt stress. Transactivates stress-related genes, including LEA3, RAB16A and DREB2A during salt stress. The sequence is that of Transcription factor MYB2 from Oryza sativa subsp. japonica (Rice).